The following is a 108-amino-acid chain: Movement protein TGB2 (108 aa).

Residues 1–8 (MPLTPPPN) are Cytoplasmic-facing. A helical transmembrane segment spans residues 9-29 (YTGLYIAAALGVSLAAVVALF). Residues 30–72 (TRSTLPIVGDSQHNLPHGGRYRDGTKAIDYFKPTKLNSVEPGN) lie on the Lumenal side of the membrane. Residues 73-93 (YWYTQPWLLVILLVALICLSG) traverse the membrane as a helical segment. The Cytoplasmic portion of the chain corresponds to 94 to 108 (RHAQCCPRCNRVHSA).

It belongs to the Tymovirales TGBp2 protein family.

The protein localises to the host endoplasmic reticulum membrane. In terms of biological role, plays a role in viral cell-to-cell propagation, by facilitating genome transport to neighboring plant cells through plasmosdesmata,. The chain is Movement protein TGB2 from Solanum tuberosum (Potato).